The chain runs to 67 residues: Beta-defensin 14 (67 aa).

Residues 1–22 form the signal peptide; the sequence is MRLHYLLFVFLILFLVPAPGDA. Cystine bridges form between C33–C62, C40–C55, and C45–C63.

The protein belongs to the beta-defensin family.

The protein resides in the secreted. In terms of biological role, has antibacterial activity. The protein is Beta-defensin 14 (Defb14) of Mus musculus (Mouse).